The sequence spans 543 residues: Chaperonin GroEL 1 (543 aa).

ATP is bound by residues 29-32 (TLGP), 86-90 (DGTTT), Gly-413, 479-481 (NAA), and Asp-495.

Belongs to the chaperonin (HSP60) family. Forms a cylinder of 14 subunits composed of two heptameric rings stacked back-to-back. Interacts with the co-chaperonin GroES.

The protein localises to the cytoplasm. It carries out the reaction ATP + H2O + a folded polypeptide = ADP + phosphate + an unfolded polypeptide.. Its function is as follows. Together with its co-chaperonin GroES, plays an essential role in assisting protein folding. The GroEL-GroES system forms a nano-cage that allows encapsulation of the non-native substrate proteins and provides a physical environment optimized to promote and accelerate protein folding. This chain is Chaperonin GroEL 1, found in Prochlorococcus marinus (strain NATL2A).